A 318-amino-acid polypeptide reads, in one-letter code: NADH-ubiquinone oxidoreductase chain 1 (318 aa).

The next 8 membrane-spanning stretches (helical) occupy residues 2 to 22, 70 to 90, 100 to 120, 147 to 167, 172 to 192, 222 to 242, 253 to 273, and 294 to 314; these read FMIN…FLTL, MFIL…IPLP, LGVL…LWSG, AIIL…TLII, TWLI…TLAE, LFFM…AILF, ELYT…FLWI, and LPLT…TSGI.

This sequence belongs to the complex I subunit 1 family. In terms of assembly, core subunit of respiratory chain NADH dehydrogenase (Complex I) which is composed of 45 different subunits.

It is found in the mitochondrion inner membrane. It carries out the reaction a ubiquinone + NADH + 5 H(+)(in) = a ubiquinol + NAD(+) + 4 H(+)(out). Its function is as follows. Core subunit of the mitochondrial membrane respiratory chain NADH dehydrogenase (Complex I) which catalyzes electron transfer from NADH through the respiratory chain, using ubiquinone as an electron acceptor. Essential for the catalytic activity and assembly of complex I. This Bos mutus grunniens (Wild yak) protein is NADH-ubiquinone oxidoreductase chain 1 (MT-ND1).